A 51-amino-acid polypeptide reads, in one-letter code: Magnetosome protein Mms5 (51 aa).

The Lumenal segment spans residues 1 to 12; that stretch reads MLSAKGVSLGLG. Residues 9 to 16 form an LG region region; it reads LGLGLGLG. Residues 13–33 traverse the membrane as a helical segment; sequence LGLGAWGPVLLGVVGVAGAIA. The Cytoplasmic portion of the chain corresponds to 34–51; the sequence is LYGYYKNRNAEPAAAEAV.

This sequence belongs to the magnetosome MamD/Mms5 family. Post-translationally, seen in gels as a band of about 5 kDa, with an N-terminus that corresponds to residue 8, suggesting it may undergo N-terminal cleavage.

The protein localises to the magnetosome membrane. Its function is as follows. Might be involved in magnetite crystal growth. This is Magnetosome protein Mms5 from Paramagnetospirillum magneticum (strain ATCC 700264 / AMB-1) (Magnetospirillum magneticum).